A 110-amino-acid polypeptide reads, in one-letter code: Proline-rich protein 15-like protein A (110 aa).

2 disordered regions span residues 29 to 51 (IAGD…TDSQ) and 65 to 110 (TKGR…KSGK). Residues 65 to 85 (TKGRHVKVSHSGRFKEKKRIR) show a composition bias toward basic residues. Residues 100–110 (TTANENNKSGK) show a composition bias toward polar residues.

The protein belongs to the PRR15 family.

This Danio rerio (Zebrafish) protein is Proline-rich protein 15-like protein A (prr15la).